The following is a 557-amino-acid chain: MKFSTVFTAIFALGTAVSAQQVVTPASDPLALELSQRNLDKLYELQERDLFSIVEGLFSSINYTSILDSIDYESIAGWTNNLLVENNNIEYLDNILNFLGDTDLVPFAVSYLLSNNETRNIVGEVVIEALPLIKDIDPTPIFVALKNSGLAYVLVADLIKNPNTVPFVKQVVVDLLDEGSFGLGDLFGGSSEATTTAVAIDSLATINTNIDLTVAAAPTTKAQSIGSIDTASLAVLFSEARTANGNGATKVANTVAVTAQVTAQVTNVGTTAKATKAVATGEINYSGITGPAYESLPPTQFGSVPTSINYSALSQISGALRKREYNDAVEAALRDIQKREEGIDDVEIALRKMKRDNIEDLLTTIFASVARSNLLNTTIQYLVTDQRFESTVVELLQGVFENIGSTLTGILDTDWSALQPLVSSLLNSGLLTDFISRAFNDDELKAVLWNDITSIFKRDMAFRDEIVKRSNGTITSLPVSDFITGVATETSALDGADGTLSSLDVTAFINTVSHSFITSNASSSAVITIQSDNAGSSYGPGFYSTIFAVFGLFAMMI.

The N-terminal stretch at 1-19 is a signal peptide; sequence MKFSTVFTAIFALGTAVSA. Residues Asn62, Asn116, Asn284, and Asn309 are each glycosylated (N-linked (GlcNAc...) asparagine). A coiled-coil region spans residues 320 to 355; the sequence is LRKREYNDAVEAALRDIQKREEGIDDVEIALRKMKR. 3 N-linked (GlcNAc...) asparagine glycosylation sites follow: Asn376, Asn471, and Asn520. The GPI-anchor amidated asparagine moiety is linked to residue Asn533. A propeptide spans 534–557 (removed in mature form); it reads AGSSYGPGFYSTIFAVFGLFAMMI.

In terms of processing, substrate for cleavage by KEX2 in vitro.

It localises to the cell membrane. Functionally, predicted GPI-anchored protein which may have a role during host infection. This Candida albicans (strain SC5314 / ATCC MYA-2876) (Yeast) protein is Predicted GPI-anchored protein 17 (PGA17).